Here is a 309-residue protein sequence, read N- to C-terminus: DnaJ protein ERDJ7 (309 aa).

An N-terminal signal peptide occupies residues 1-36 (MSQVGSAGEGSNSMAAAPPPRLLLLVVLLLVPVSNA). Residues 37–130 (IYCEEDDCYD…YRAYYGHKTD (94 aa)) are Lumenal-facing. In terms of domain architecture, J spans 43-107 (DCYDLLGVKQ…STRGQYDYAI (65 aa)). A glycan (N-linked (GlcNAc...) asparagine) is linked at N55. Residues 131–151 (PRAVLIGLLLIISAFQYLNQF) traverse the membrane as a helical segment. Over 152-219 (GRYSKAIETV…GVEKPSLWRL (68 aa)) the chain is Cytoplasmic. A helical transmembrane segment spans residues 220–242 (YGVQFILLPYSIGKVLSWKFCWF). At 243–309 (WRYRIKKLPY…EMRKESKRRR (67 aa)) the chain is on the lumenal side.

The protein localises to the endoplasmic reticulum membrane. In terms of biological role, may play a role in protein folding in the endoplasmic reticulum. This Oryza sativa subsp. japonica (Rice) protein is DnaJ protein ERDJ7.